The primary structure comprises 335 residues: Methionine import ATP-binding protein MetN 1 (335 aa).

Residues 2 to 242 (IEFHNVHKTY…PQHATTRRFV (241 aa)) form the ABC transporter domain. 38–45 (GHSGAGKS) is a binding site for ATP.

The protein belongs to the ABC transporter superfamily. Methionine importer (TC 3.A.1.24) family. The complex is composed of two ATP-binding proteins (MetN), two transmembrane proteins (MetI) and a solute-binding protein (MetQ).

Its subcellular location is the cell inner membrane. It carries out the reaction L-methionine(out) + ATP + H2O = L-methionine(in) + ADP + phosphate + H(+). The enzyme catalyses D-methionine(out) + ATP + H2O = D-methionine(in) + ADP + phosphate + H(+). Part of the ABC transporter complex MetNIQ involved in methionine import. Responsible for energy coupling to the transport system. This chain is Methionine import ATP-binding protein MetN 1, found in Pseudomonas syringae pv. syringae (strain B728a).